Reading from the N-terminus, the 236-residue chain is MTSEKGPSTGDPTLRRRIEPWEFDVFYDPRELRKEACLLYEIKWGMSRKIWRSSGKNTTNHVEVNFIKKFTSERDFHPSMSCSITWFLSWSPCWECSQAIREFLSRHPGVTLVIYVARLFWHMDQQNRQGLRDLVNSGVTIQIMRASEYYHCWRNFVNYPPGDEAHWPQYPPLWMMLYALELHCIILSLPPCLKISRRWQNHLTFFRLHLQNCHYQTIPPHILLATGLIHPSVAWR.

The CMP/dCMP-type deaminase domain maps to 10 to 134 (GDPTLRRRIE…QQNRQGLRDL (125 aa)). H61 is a Zn(2+) binding site. The active-site Proton donor is E63. Residues C93 and C96 each contribute to the Zn(2+) site.

This sequence belongs to the cytidine and deoxycytidylate deaminase family. Homodimer. Interacts with A1CF; form an mRNA editing complex. Interacts with RBM47; form an mRNA editing complex. Found in a complex with CELF2/CUGBP2 and A1CF. Interacts with HNRPAB. Interacts with SYNCRIP. Zn(2+) is required as a cofactor. In terms of tissue distribution, expressed exclusively in the small intestine.

It is found in the cytoplasm. The protein localises to the nucleus. The enzyme catalyses a cytidine in mRNA + H2O + H(+) = a uridine in mRNA + NH4(+). It carries out the reaction cytidine(6666) in apoB mRNA + H2O + H(+) = uridine(6666) in apoB mRNA + NH4(+). Cytidine deaminase catalyzing the cytidine to uridine postranscriptional editing of a variety of mRNAs. Form complexes with cofactors that confer differential editing activity and selectivity. Responsible for the postranscriptional editing of a CAA codon for Gln to a UAA codon for stop in the apolipoprotein B mRNA. Also involved in CGA (Arg) to UGA (Stop) editing in the NF1 mRNA. May also play a role in the epigenetic regulation of gene expression by participating in DNA demethylation. The polypeptide is C-&gt;U-editing enzyme APOBEC-1 (Homo sapiens (Human)).